The sequence spans 286 residues: Glycine--tRNA ligase alpha subunit (286 aa).

It belongs to the class-II aminoacyl-tRNA synthetase family. In terms of assembly, tetramer of two alpha and two beta subunits.

It is found in the cytoplasm. It carries out the reaction tRNA(Gly) + glycine + ATP = glycyl-tRNA(Gly) + AMP + diphosphate. The sequence is that of Glycine--tRNA ligase alpha subunit from Thermotoga neapolitana (strain ATCC 49049 / DSM 4359 / NBRC 107923 / NS-E).